The primary structure comprises 218 residues: NAD(P)H-quinone oxidoreductase subunit I (218 aa).

4Fe-4S ferredoxin-type domains are found at residues 55 to 84 (GRIH…VDWV) and 95 to 124 (RNYS…MTEE). 8 residues coordinate [4Fe-4S] cluster: Cys-64, Cys-67, Cys-70, Cys-74, Cys-104, Cys-107, Cys-110, and Cys-114. The tract at residues 169 to 218 (MDPHELPANQQRAGKLPSQIIKELQAEKSEEKGNNNSSDIVPNKLNSTNK) is disordered. Positions 192–201 (LQAEKSEEKG) are enriched in basic and acidic residues. Polar residues predominate over residues 202–218 (NNNSSDIVPNKLNSTNK).

This sequence belongs to the complex I 23 kDa subunit family. NDH-1 is composed of at least 11 different subunits. The cofactor is [4Fe-4S] cluster.

Its subcellular location is the cellular thylakoid membrane. It carries out the reaction a plastoquinone + NADH + (n+1) H(+)(in) = a plastoquinol + NAD(+) + n H(+)(out). The enzyme catalyses a plastoquinone + NADPH + (n+1) H(+)(in) = a plastoquinol + NADP(+) + n H(+)(out). Its function is as follows. NDH-1 shuttles electrons from an unknown electron donor, via FMN and iron-sulfur (Fe-S) centers, to quinones in the respiratory and/or the photosynthetic chain. The immediate electron acceptor for the enzyme in this species is believed to be plastoquinone. Couples the redox reaction to proton translocation, and thus conserves the redox energy in a proton gradient. In Prochlorococcus marinus (strain NATL1A), this protein is NAD(P)H-quinone oxidoreductase subunit I.